The chain runs to 266 residues: ATP synthase subunit a (266 aa).

Transmembrane regions (helical) follow at residues 41-61, 98-118, 119-139, 152-172, 178-198, 216-236, and 237-257; these read IDTLIMSFGLGALFCYVFWLA, VIAPLALTIFCWVFLSNLMDL, VPIDMVPSIMMAVGVDYWKIL, LSVLALIIIYGVMGQGVGGWL, HPLGPWLAPANLILNIVEFIA, LVFILISLLPWWIQWALGTPW, and AIFHILVVPLQAFIFMMLTVV.

The protein belongs to the ATPase A chain family. In terms of assembly, F-type ATPases have 2 components, CF(1) - the catalytic core - and CF(0) - the membrane proton channel. CF(1) has five subunits: alpha(3), beta(3), gamma(1), delta(1), epsilon(1). CF(0) has three main subunits: a(1), b(2) and c(9-12). The alpha and beta chains form an alternating ring which encloses part of the gamma chain. CF(1) is attached to CF(0) by a central stalk formed by the gamma and epsilon chains, while a peripheral stalk is formed by the delta and b chains.

Its subcellular location is the cell inner membrane. In terms of biological role, key component of the proton channel; it plays a direct role in the translocation of protons across the membrane. The protein is ATP synthase subunit a of Halorhodospira halophila (strain DSM 244 / SL1) (Ectothiorhodospira halophila (strain DSM 244 / SL1)).